The primary structure comprises 332 residues: Fe(3+) dicitrate transport system permease protein FecC (332 aa).

Topologically, residues 1–7 (MTAIKHP) are cytoplasmic. The helical transmembrane segment at 8–28 (VLLWGLPVAALIIIFWLSLFC) threads the bilayer. The Periplasmic segment spans residues 29–64 (YSAIPVSGADATRALLPGHTPTLPEALVQNLRLPRS). A helical transmembrane segment spans residues 65-85 (LVAVLIGASLALAGTLLQTLT). Topologically, residues 86–100 (HNPMASPSLLGINSG) are cytoplasmic. A helical membrane pass occupies residues 101–121 (AALAMALTSALSPTPIAGYSL). A topological domain (periplasmic) is located at residue serine 122. The helical transmembrane segment at 123–143 (FIAACGGGVSWLLVMTAGGGF) threads the bilayer. At 144 to 151 (RHTHDRNK) the chain is on the cytoplasmic side. A helical transmembrane segment spans residues 152 to 172 (LILAGIALSAFCMGLTRITLL). Topologically, residues 173 to 199 (LAEDHAYGIFYWLAGGVSHARWQDVWQ) are periplasmic. Residues 200 to 220 (LLPVVVTAVPVVLLLANQLNL) traverse the membrane as a helical segment. Residues 221 to 244 (LNLSDSTAHTLGVNLTRLRLVINM) are Cytoplasmic-facing. The chain crosses the membrane as a helical span at residues 245 to 265 (LVLLLVGACVSVAGPVAFIGL). At 266-307 (LVPHLARFWAGFDQRNVLPVSMLLGATLMLLADVLARALAFP) the chain is on the periplasmic side. A helical membrane pass occupies residues 308-328 (GDLPAGAVLALIGSPCFVWLV). Residues 329–332 (RRRG) are Cytoplasmic-facing.

This sequence belongs to the binding-protein-dependent transport system permease family. FecCD subfamily. In terms of assembly, the complex is composed of two ATP-binding proteins (FecE), two transmembrane proteins (FecC and FecD) and a solute-binding protein (FecB). Interacts with FecB.

The protein localises to the cell inner membrane. In terms of biological role, part of the ABC transporter complex FecBCDE involved in citrate-dependent Fe(3+) uptake. Probably responsible for the translocation of the substrate across the membrane. In Escherichia coli (strain K12), this protein is Fe(3+) dicitrate transport system permease protein FecC.